The following is a 669-amino-acid chain: MTVTYSSKVANATFFGFHRLLLKWRGSIYKLLYREFIVFAVLYTAISLVYRLLLTGAQKRYFEKLSIYCDRYAEQIPVTFVLGFYVTLVVNRWWNQFVNLPWPDRLMLLISSSVHGSDQHGRLLRRTLMRYVNLTSLLIFRSVSTAVYKRFPTMDHVVEAGFMTADERKLFDHLKSPHLKYWVPFIWFGNLATKARNEGRIRDSVDLQSLMTEMNRYRSWCSLLFGYDWVGIPLVYTQVVTLAVYTFFFACLIGRQFLDPTKGYVGHDLDLYVPIFTLLQFFFYAGWLKVAEQLINPFGEDDDDFETNWCIDRNLQVSLLAVDEMHMSLPKMKKDIYWDDSAARPPYTLAAADYCIPSFLGSTIQMGLSGSNFPAEDWLWNYEKHGNRHSVMRRVKRFLSTHEHPGSPRRRRSFGRQASDSSMFLPPSPARDLLDVPSRNPHRGSPTRKQSRSQEGSPKLHSSMGELSTIRETSRTSTLQSLSPQSSVRSSPTKMPQVPEVLITAAEAPAFSADSHQHDSTTSILSLEFTGVQPSGTEQQVEPSGTPPGDPNPQTTSASTERDLFKFEEDLEDDRFPKRWSLPEFLESRHTSLGNLGPDPVSPRDALLLPDTETPSETNGIHPGAGSALAPDILYLMESLDKETDILEFNNEHTGESPKGTPQRPRTWF.

Over 1–31 (MTVTYSSKVANATFFGFHRLLLKWRGSIYKL) the chain is Cytoplasmic. Ala10 is a Ca(2+) binding site. Residues 32 to 51 (LYREFIVFAVLYTAISLVYR) traverse the membrane as a helical segment. Residues 52–60 (LLLTGAQKR) lie on the Extracellular side of the membrane. A helical membrane pass occupies residues 61-82 (YFEKLSIYCDRYAEQIPVTFVL). The Cytoplasmic portion of the chain corresponds to 83–237 (GFYVTLVVNR…DWVGIPLVYT (155 aa)). Residues 238-255 (QVVTLAVYTFFFACLIGR) form a helical membrane-spanning segment. Residues 256–274 (QFLDPTKGYVGHDLDLYVP) are Extracellular-facing. Residues 275–288 (IFTLLQFFFYAGWL) traverse the membrane as a helical segment. At 289–669 (KVAEQLINPF…GTPQRPRTWF (381 aa)) the chain is on the cytoplasmic side. Positions 293, 296, 301, and 304 each coordinate Ca(2+). Disordered stretches follow at residues 399-496 (LSTH…TKMP), 533-560 (QPSGTEQQVEPSGTPPGDPNPQTTSAST), 591-627 (TSLGNLGPDPVSPRDALLLPDTETPSETNGIHPGAGS), and 646-669 (ILEFNNEHTGESPKGTPQRPRTWF). The span at 440–451 (NPHRGSPTRKQS) shows a compositional bias: basic residues. Over residues 475 to 492 (RTSTLQSLSPQSSVRSSP) the composition is skewed to low complexity. Over residues 533 to 543 (QPSGTEQQVEP) the composition is skewed to polar residues. Residues 646-656 (ILEFNNEHTGE) show a composition bias toward basic and acidic residues.

This sequence belongs to the anion channel-forming bestrophin (TC 1.A.46) family. Calcium-sensitive chloride channel subfamily. In terms of tissue distribution, expressed in heart. As to expression, expressed in brain, retina/retinal pigment epithelium (RPE) and skeletal muscle. Expressed in acinar cells of parotid glands. Expressed in lung, kidney and testis.

It is found in the cell membrane. The enzyme catalyses chloride(in) = chloride(out). Ligand-gated anion channel that allows the movement of chloride monoatomic anions across cell membranes when activated by calcium (Ca2+). Its function is as follows. Does not function as calcium-gated chloride channel. This is Bestrophin-3 (Best3) from Mus musculus (Mouse).